A 568-amino-acid polypeptide reads, in one-letter code: 2-succinyl-5-enolpyruvyl-6-hydroxy-3-cyclohexene-1-carboxylate synthase (568 aa).

The protein belongs to the TPP enzyme family. MenD subfamily. In terms of assembly, homodimer. Requires Mg(2+) as cofactor. Mn(2+) is required as a cofactor. It depends on thiamine diphosphate as a cofactor.

The enzyme catalyses isochorismate + 2-oxoglutarate + H(+) = 5-enolpyruvoyl-6-hydroxy-2-succinyl-cyclohex-3-ene-1-carboxylate + CO2. Its pathway is quinol/quinone metabolism; 1,4-dihydroxy-2-naphthoate biosynthesis; 1,4-dihydroxy-2-naphthoate from chorismate: step 2/7. The protein operates within quinol/quinone metabolism; menaquinone biosynthesis. Its function is as follows. Catalyzes the thiamine diphosphate-dependent decarboxylation of 2-oxoglutarate and the subsequent addition of the resulting succinic semialdehyde-thiamine pyrophosphate anion to isochorismate to yield 2-succinyl-5-enolpyruvyl-6-hydroxy-3-cyclohexene-1-carboxylate (SEPHCHC). This chain is 2-succinyl-5-enolpyruvyl-6-hydroxy-3-cyclohexene-1-carboxylate synthase, found in Haemophilus influenzae (strain 86-028NP).